Reading from the N-terminus, the 245-residue chain is Zinc finger protein AZF1 (245 aa).

Residues 1–15 are compositionally biased toward polar residues; sequence MALETLNSPTATTTA. Disordered regions lie at residues 1–57 and 112–141; these read MALE…NKNL and LGGH…SHSN. The C2H2-type 1 zinc-finger motif lies at 97–119; sequence YKCTVCGKSFSSYQALGGHKTSH. The segment covering 123-134 has biased composition (polar residues); sequence TNTSITSGNQEL. The C2H2-type 2 zinc finger occupies 164–186; the sequence is HTCSICFKSFASGQALGGHKRCH. The interval 193-231 is disordered; it reads GNGNGSSSNSVELVAGSDVSDVDNERWSEESAIGGHRGF.

In terms of tissue distribution, highly expressed in roots and at lower levels in leaves and stems.

It is found in the nucleus. Its function is as follows. Transcriptional repressor involved in the inhibition of plant growth under abiotic stress conditions. Can repress the expression of various genes, including osmotic stress and abscisic acid-repressive genes and auxin-inducible genes, by binding to their promoter regions in a DNA sequence-specific manner. The chain is Zinc finger protein AZF1 (AZF1) from Arabidopsis thaliana (Mouse-ear cress).